The following is a 348-amino-acid chain: Zinc finger protein 843 (348 aa).

Residues 33-55 (CKCKACGRGFTQSASLLQHWRVH) form a C2H2-type 1 zinc finger. The segment at 145–167 (FCCCSCGDSVNEKTSLSQRVLPH) adopts a C2H2-type 2; degenerate zinc-finger fold. A compositionally biased stretch (polar residues) spans 184 to 195 (APSSVAPDSTSG). 2 disordered regions span residues 184-203 (APSS…GSPG) and 256-329 (ATQP…WRGA).

The chain is Zinc finger protein 843 (ZNF843) from Homo sapiens (Human).